Here is a 205-residue protein sequence, read N- to C-terminus: Suppressor of IKBKE 1 (205 aa).

Coiled-coil stretches lie at residues 4–32 (TIDKILQDAKTLLERLKDHDNAAESLIDQ) and 154–192 (KAIQLDEDQAYNIQERLAQLELENKELREILSVRNESLR).

The protein belongs to the SIKE family. Interacts with IKBKE and TBK1 via its coiled coil region. Interaction with TBK1 is disrupted upon viral infection or TLR3 stimulation. Interacts with CDC42BPB. Associates with the STRIPAK core complex composed of PP2A catalytic and scaffolding subunits, the striatins (PP2A regulatory subunits), the striatin-associated proteins MOB4, STRIP1 and STRIP2, PDCD10 and members of the STE20 kinases, such as STK24 and STK26.

The protein localises to the cytoplasm. Suppressor of IKK-epsilon. Associates with the striatin-interacting phosphatase and kinase (STRIPAK) core complex, forming the extended (SIKE1:SLMAP)STRIPAK complex. The (SIKE1:SLMAP)STRIPAK complex dephosphorylates STK3 leading to the inhibition of Hippo signaling and the control of cell growth. The sequence is that of Suppressor of IKBKE 1 (sike1) from Xenopus laevis (African clawed frog).